The chain runs to 332 residues: Glucokinase (332 aa).

15–20 (ADIGGT) is an ATP binding site.

This sequence belongs to the bacterial glucokinase family.

It is found in the cytoplasm. It catalyses the reaction D-glucose + ATP = D-glucose 6-phosphate + ADP + H(+). In Campylobacter jejuni subsp. doylei (strain ATCC BAA-1458 / RM4099 / 269.97), this protein is Glucokinase.